The following is a 210-amino-acid chain: CASP-like protein 3A2 (210 aa).

Topologically, residues Met-1 to Asn-45 are cytoplasmic. The helical transmembrane segment at Val-46–Ala-66 threads the bilayer. The Extracellular portion of the chain corresponds to Gln-67–Glu-92. The chain crosses the membrane as a helical span at residues Tyr-93–Val-113. Residues Ser-114 to His-128 lie on the Cytoplasmic side of the membrane. The chain crosses the membrane as a helical span at residues Ala-129–Ala-149. Residues Ala-150–Asp-178 are Extracellular-facing. A glycan (N-linked (GlcNAc...) asparagine) is linked at Asn-157. The helical transmembrane segment at His-179–Val-199 threads the bilayer. Residues Gln-200–Tyr-210 are Cytoplasmic-facing.

It belongs to the Casparian strip membrane proteins (CASP) family. As to quaternary structure, homodimer and heterodimers.

The protein localises to the cell membrane. This Populus trichocarpa (Western balsam poplar) protein is CASP-like protein 3A2.